The sequence spans 184 residues: ATP synthase subunit b, chloroplastic (184 aa).

Residues 27–49 (LATNPINLSVVLGVLIFFGKGVL) traverse the membrane as a helical segment.

This sequence belongs to the ATPase B chain family. In terms of assembly, F-type ATPases have 2 components, F(1) - the catalytic core - and F(0) - the membrane proton channel. F(1) has five subunits: alpha(3), beta(3), gamma(1), delta(1), epsilon(1). F(0) has four main subunits: a(1), b(1), b'(1) and c(10-14). The alpha and beta chains form an alternating ring which encloses part of the gamma chain. F(1) is attached to F(0) by a central stalk formed by the gamma and epsilon chains, while a peripheral stalk is formed by the delta, b and b' chains.

The protein resides in the plastid. It localises to the chloroplast thylakoid membrane. Its function is as follows. F(1)F(0) ATP synthase produces ATP from ADP in the presence of a proton or sodium gradient. F-type ATPases consist of two structural domains, F(1) containing the extramembraneous catalytic core and F(0) containing the membrane proton channel, linked together by a central stalk and a peripheral stalk. During catalysis, ATP synthesis in the catalytic domain of F(1) is coupled via a rotary mechanism of the central stalk subunits to proton translocation. Functionally, component of the F(0) channel, it forms part of the peripheral stalk, linking F(1) to F(0). The protein is ATP synthase subunit b, chloroplastic of Populus alba (White poplar).